The primary structure comprises 158 residues: 2-C-methyl-D-erythritol 2,4-cyclodiphosphate synthase (158 aa).

Residues aspartate 8 and histidine 10 each contribute to the a divalent metal cation site. 4-CDP-2-C-methyl-D-erythritol 2-phosphate contacts are provided by residues 8 to 10 and 34 to 35; these read DVH and HS. Histidine 42 contributes to the a divalent metal cation binding site. Residues 56–58, 61–65, 100–106, 132–135, and phenylalanine 139 each bind 4-CDP-2-C-methyl-D-erythritol 2-phosphate; these read DIG, FPDTD, AQKPKML, and TTEE.

This sequence belongs to the IspF family. As to quaternary structure, homotrimer. Requires a divalent metal cation as cofactor.

The enzyme catalyses 4-CDP-2-C-methyl-D-erythritol 2-phosphate = 2-C-methyl-D-erythritol 2,4-cyclic diphosphate + CMP. It participates in isoprenoid biosynthesis; isopentenyl diphosphate biosynthesis via DXP pathway; isopentenyl diphosphate from 1-deoxy-D-xylulose 5-phosphate: step 4/6. Functionally, involved in the biosynthesis of isopentenyl diphosphate (IPP) and dimethylallyl diphosphate (DMAPP), two major building blocks of isoprenoid compounds. Catalyzes the conversion of 4-diphosphocytidyl-2-C-methyl-D-erythritol 2-phosphate (CDP-ME2P) to 2-C-methyl-D-erythritol 2,4-cyclodiphosphate (ME-CPP) with a corresponding release of cytidine 5-monophosphate (CMP). In Clostridium beijerinckii (strain ATCC 51743 / NCIMB 8052) (Clostridium acetobutylicum), this protein is 2-C-methyl-D-erythritol 2,4-cyclodiphosphate synthase.